A 1285-amino-acid chain; its full sequence is Tat-binding homolog 7 (1285 aa).

Disordered regions lie at residues 1-95 (MARS…LTYR), 121-173 (MSDD…RTRR), 224-243 (GREE…EKEQ), and 258-359 (QEDE…ERGR). 2 stretches are compositionally biased toward acidic residues: residues 226–237 (EEEEEGDEEEAE) and 258–270 (QEDE…ESSE). The segment covering 311–325 (NRHHRNRNTSNRRRR) has biased composition (basic residues). 446–453 (GPPGTGKT) provides a ligand contact to ATP. One can recognise a Bromo domain in the interval 928 to 1032 (ALQRQMRMFF…NTFRDAIDDM (105 aa)). Residues 1100–1196 (EKLKEKLGIS…PTIQSSSSQE (97 aa)) form a disordered region. Over residues 1136–1149 (KLNKKKKDQKRNKK) the composition is skewed to basic residues. The segment covering 1155–1175 (PDGDDTEETEEAVAENNVDAD) has biased composition (acidic residues).

Belongs to the AAA ATPase family.

Functionally, thought to form a complex that enhances transcription from repetitive DNA sequences by modulating chromatin structure. The polypeptide is Tat-binding homolog 7 (Caenorhabditis briggsae).